The following is a 75-amino-acid chain: Serine rich endogenous peptide 20 (75 aa).

An N-terminal signal peptide occupies residues 1-25 (MYKLTLCILTLSFLLLSGLSNTVLA). The SCOOP motif motif lies at 52–66 (KIGASGSNSGRAPSC). Positions 54–75 (GASGSNSGRAPSCNNSCKPNRP) are disordered. Positions 56 to 58 (SGS) match the SxS motif essential for MIK2 binding motif. Polar residues predominate over residues 56 to 75 (SGSNSGRAPSCNNSCKPNRP).

It belongs to the serine rich endogenous peptide (SCOOP) phytocytokine family. As to quaternary structure, interacts with MIK2 (via extracellular leucine-rich repeat domain); this interaction triggers the formation of complex between MIK2 and the BAK1/SERK3 and SERK4 coreceptors, and subsequent BAK1 activation by phosphorylation. In terms of tissue distribution, mostly expressed in roots.

It is found in the cell membrane. It localises to the secreted. Its subcellular location is the extracellular space. The protein resides in the apoplast. Its function is as follows. Brassicaceae-specific phytocytokine (plant endogenous peptide released into the apoplast) perceived by MIK2 in a BAK1/SERK3 and SERK4 coreceptors-dependent manner, that modulates various physiological and antimicrobial processes including growth prevention and reactive oxygen species (ROS) response regulation. Inhibits root growth. The chain is Serine rich endogenous peptide 20 from Arabidopsis thaliana (Mouse-ear cress).